Consider the following 488-residue polypeptide: Protein nucleotidyltransferase YdiU (488 aa).

ATP contacts are provided by Gly-91, Gly-93, Arg-94, Lys-114, Asp-126, Gly-127, Arg-177, and Arg-184. Asp-253 functions as the Proton acceptor in the catalytic mechanism. Positions 254 and 263 each coordinate Mg(2+). Residue Asp-263 participates in ATP binding.

Belongs to the SELO family. It depends on Mg(2+) as a cofactor. Requires Mn(2+) as cofactor.

The catalysed reaction is L-seryl-[protein] + ATP = 3-O-(5'-adenylyl)-L-seryl-[protein] + diphosphate. The enzyme catalyses L-threonyl-[protein] + ATP = 3-O-(5'-adenylyl)-L-threonyl-[protein] + diphosphate. It catalyses the reaction L-tyrosyl-[protein] + ATP = O-(5'-adenylyl)-L-tyrosyl-[protein] + diphosphate. It carries out the reaction L-histidyl-[protein] + UTP = N(tele)-(5'-uridylyl)-L-histidyl-[protein] + diphosphate. The catalysed reaction is L-seryl-[protein] + UTP = O-(5'-uridylyl)-L-seryl-[protein] + diphosphate. The enzyme catalyses L-tyrosyl-[protein] + UTP = O-(5'-uridylyl)-L-tyrosyl-[protein] + diphosphate. In terms of biological role, nucleotidyltransferase involved in the post-translational modification of proteins. It can catalyze the addition of adenosine monophosphate (AMP) or uridine monophosphate (UMP) to a protein, resulting in modifications known as AMPylation and UMPylation. In Bacillus thuringiensis subsp. konkukian (strain 97-27), this protein is Protein nucleotidyltransferase YdiU.